A 152-amino-acid chain; its full sequence is Transcriptional regulator MraZ (152 aa).

2 consecutive SpoVT-AbrB domains span residues Ala-5–Glu-52 and Ala-81–Ala-124.

Belongs to the MraZ family. In terms of assembly, forms oligomers.

It is found in the cytoplasm. The protein resides in the nucleoid. This Shewanella halifaxensis (strain HAW-EB4) protein is Transcriptional regulator MraZ.